A 335-amino-acid polypeptide reads, in one-letter code: Cytochrome c biogenesis protein CcsA (335 aa).

The next 8 helical transmembrane spans lie at 15 to 35 (FLLL…PNVT), 36 to 56 (WLPT…ATLL), 68 to 88 (LSNL…IHLV), 97 to 117 (LVGV…ALSL), 142 to 162 (VMML…AFLV), 243 to 263 (IIGL…VWAN), 278 to 298 (WALI…TKGW), and 304 to 324 (AILA…VNLL).

It belongs to the CcmF/CycK/Ccl1/NrfE/CcsA family. As to quaternary structure, may interact with ccs1.

Its subcellular location is the cellular thylakoid membrane. In terms of biological role, required during biogenesis of c-type cytochromes (cytochrome c6 and cytochrome f) at the step of heme attachment. The protein is Cytochrome c biogenesis protein CcsA of Crocosphaera subtropica (strain ATCC 51142 / BH68) (Cyanothece sp. (strain ATCC 51142)).